Reading from the N-terminus, the 315-residue chain is tRNA-dihydrouridine(16) synthase (315 aa).

Residues 7–9 (PME) and Gln-68 each bind FMN. The Proton donor role is filled by Cys-98. FMN is bound by residues Lys-139, 200-202 (NGE), and 224-225 (GR).

Belongs to the Dus family. DusC subfamily. The cofactor is FMN.

The catalysed reaction is 5,6-dihydrouridine(16) in tRNA + NADP(+) = uridine(16) in tRNA + NADPH + H(+). The enzyme catalyses 5,6-dihydrouridine(16) in tRNA + NAD(+) = uridine(16) in tRNA + NADH + H(+). Catalyzes the synthesis of 5,6-dihydrouridine (D), a modified base found in the D-loop of most tRNAs, via the reduction of the C5-C6 double bond in target uridines. DusC specifically modifies U16 in tRNAs. This is tRNA-dihydrouridine(16) synthase from Escherichia coli (strain K12).